We begin with the raw amino-acid sequence, 467 residues long: Membrane-bound acylglycerophosphatidylinositol O-acyltransferase mboat7 (467 aa).

Over Met1 to Glu5 the chain is Cytoplasmic. The helical transmembrane segment at Leu6–Phe22 threads the bilayer. At Arg23 to Ala33 the chain is on the lumenal side. Residues Ala34–Val57 form a helical membrane-spanning segment. Residues Leu58–Ala73 lie on the Cytoplasmic side of the membrane. A helical transmembrane segment spans residues Leu74 to Gly93. Residues Leu94–Arg193 are Lumenal-facing. A helical membrane pass occupies residues Leu194–Phe211. Topologically, residues Pro212 to Phe230 are cytoplasmic. The helical transmembrane segment at Phe231 to Leu260 threads the bilayer. Residues Gly261–Trp421 are Lumenal-facing. Asn316 is a glycosylation site (N-linked (GlcNAc...) asparagine). Residues Ser422–Met442 form a helical membrane-spanning segment. Residues Lys443 to Glu467 lie on the Cytoplasmic side of the membrane. A disordered region spans residues Lys447–Glu467. Over residues Arg451–Glu467 the composition is skewed to basic and acidic residues.

Belongs to the membrane-bound acyltransferase family.

It localises to the endoplasmic reticulum membrane. It carries out the reaction a 1-acyl-sn-glycero-3-phospho-(1D-myo-inositol) + (5Z,8Z,11Z,14Z)-eicosatetraenoyl-CoA = a 1-acyl-2-(5Z,8Z,11Z,14Z-eicosatetraenoyl)-sn-glycero-3-phospho-(1D-myo-inositol) + CoA. It catalyses the reaction (5Z,8Z,11Z,14Z)-eicosatetraenoyl-CoA + 1-hexadecanoyl-sn-glycero-3-phosphocholine = 1-hexadecanoyl-2-(5Z,8Z,11Z,14Z-eicosatetraenoyl)-sn-glycero-3-phosphocholine + CoA. The catalysed reaction is a 1-acyl-sn-glycero-3-phospho-(1D-myo-inositol) + an acyl-CoA = a 1,2-diacyl-sn-glycero-3-phospho-(1D-myo-inositol) + CoA. The enzyme catalyses 1-octadecanoyl-sn-glycero-3-phospho-(1D-myo-inositol) + (5Z,8Z,11Z,14Z)-eicosatetraenoyl-CoA = 1-octadecanoyl-2-(5Z,8Z,11Z,14Z-eicosatetraenoyl)-sn-glycero-3-phospho-(1D-myo-inositol) + CoA. The protein operates within lipid metabolism; phospholipid metabolism. In terms of biological role, acyltransferase which catalyzes the transfer of an acyl group from an acyl-CoA to a lysophosphatidylinositol (1-acylglycerophosphatidylinositol or LPI) leading to the production of a phosphatidylinositol (1,2-diacyl-sn-glycero-3-phosphoinositol or PI) and participates in the reacylation step of the phospholipid remodeling pathway also known as the Lands cycle. Prefers arachidonoyl-CoA as the acyl donor, thus contributing to the regulation of free levels arachidonic acid in cell. This Danio rerio (Zebrafish) protein is Membrane-bound acylglycerophosphatidylinositol O-acyltransferase mboat7 (mboat7).